The sequence spans 154 residues: MAKKNGLTELEQLKKENEELRKKLEELEALINNDSDDDEELQEIENPYTVTNRAIDELVSPKDTMFYLSGNQISLILSAFEFARLPTYFGEEPVTELAEYAHKLKHYLVSKGGRGRRDILRVLRVSSGQTRENVNKSILKQLFDHGKEHEDEEE.

This protein may be involved in virus assembly. Essential for virus function. This is an uncharacterized protein from Saccharolobus solfataricus (Sulfolobus solfataricus).